Reading from the N-terminus, the 176-residue chain is Large ribosomal subunit protein uL6 (176 aa).

Positions 151–169 are enriched in basic and acidic residues; the sequence is RPPEPYKGRGIKYTDEHIQ. A disordered region spans residues 151–176; that stretch reads RPPEPYKGRGIKYTDEHIQRKAGKTK.

This sequence belongs to the universal ribosomal protein uL6 family. In terms of assembly, part of the 50S ribosomal subunit.

This protein binds to the 23S rRNA, and is important in its secondary structure. It is located near the subunit interface in the base of the L7/L12 stalk, and near the tRNA binding site of the peptidyltransferase center. In Desulfosudis oleivorans (strain DSM 6200 / JCM 39069 / Hxd3) (Desulfococcus oleovorans), this protein is Large ribosomal subunit protein uL6.